The primary structure comprises 440 residues: Phosphatidylcholine-sterol acyltransferase (440 aa).

An N-terminal signal peptide occupies residues 1-24; the sequence is MGPPGSPWQWVPLLLGLLLPPAAP. N44 carries N-linked (GlcNAc...) asparagine glycosylation. Residues C74 and C98 are joined by a disulfide bond. N108 carries an N-linked (GlcNAc...) asparagine glycan. Catalysis depends on S205, which acts as the Nucleophile. Residue N296 is glycosylated (N-linked (GlcNAc...) asparagine). C337 and C380 form a disulfide bridge. Catalysis depends on charge relay system residues D369 and H401. Residue N408 is glycosylated (N-linked (GlcNAc...) asparagine).

The protein belongs to the AB hydrolase superfamily. Lipase family. As to expression, most abundant in liver and cerebellum.

Its subcellular location is the secreted. It catalyses the reaction a sterol + a 1,2-diacyl-sn-glycero-3-phosphocholine = a sterol ester + a 1-acyl-sn-glycero-3-phosphocholine. Its activity is regulated as follows. APOA1 is the most potent activator in plasma. Also activated by APOE, APOC1 and APOA4. In terms of biological role, central enzyme in the extracellular metabolism of plasma lipoproteins. Synthesized mainly in the liver and secreted into plasma where it converts cholesterol and phosphatidylcholines (lecithins) to cholesteryl esters and lysophosphatidylcholines on the surface of high and low density lipoproteins (HDLs and LDLs). The cholesterol ester is then transported back to the liver. Has a preference for plasma 16:0-18:2 or 18:O-18:2 phosphatidylcholines. Also produced in the brain by primary astrocytes, and esterifies free cholesterol on nascent APOE-containing lipoproteins secreted from glia and influences cerebral spinal fluid (CSF) APOE- and APOA1 levels. Together with APOE and the cholesterol transporter ABCA1, plays a key role in the maturation of glial-derived, nascent lipoproteins. Required for remodeling high-density lipoprotein particles into their spherical forms. The polypeptide is Phosphatidylcholine-sterol acyltransferase (LCAT) (Papio anubis (Olive baboon)).